We begin with the raw amino-acid sequence, 203 residues long: Thymidylate kinase (203 aa).

7–14 (GGEGAGKT) contacts ATP.

Belongs to the thymidylate kinase family.

It catalyses the reaction dTMP + ATP = dTDP + ADP. Phosphorylation of dTMP to form dTDP in both de novo and salvage pathways of dTTP synthesis. The protein is Thymidylate kinase of Chlamydia trachomatis serovar L2 (strain ATCC VR-902B / DSM 19102 / 434/Bu).